A 62-amino-acid chain; its full sequence is UPF0434 protein Smed_3047 (62 aa).

This sequence belongs to the UPF0434 family.

The sequence is that of UPF0434 protein Smed_3047 from Sinorhizobium medicae (strain WSM419) (Ensifer medicae).